The sequence spans 187 residues: Ubiquinone biosynthesis protein COQ4 homolog, mitochondrial (187 aa).

Positions 77, 78, 81, and 93 each coordinate Zn(2+).

This sequence belongs to the COQ4 family. Component of a multi-subunit COQ enzyme complex. Zn(2+) serves as cofactor.

The protein resides in the mitochondrion inner membrane. The enzyme catalyses a 4-hydroxy-3-methoxy-5-(all-trans-polyprenyl)benzoate + H(+) = a 2-methoxy-6-(all-trans-polyprenyl)phenol + CO2. The protein operates within cofactor biosynthesis; ubiquinone biosynthesis. Functionally, lyase that catalyzes the C1-decarboxylation of 4-hydroxy-3-methoxy-5-(all-trans-polyprenyl)benzoic acid into 2-methoxy-6-(all-trans-polyprenyl)phenol during ubiquinone biosynthesis. The polypeptide is Ubiquinone biosynthesis protein COQ4 homolog, mitochondrial (Leishmania braziliensis).